A 449-amino-acid chain; its full sequence is Glutamyl-tRNA reductase (449 aa).

Substrate-binding positions include 58-61 (TCNR), Ser-121, 126-128 (ETQ), and Gln-132. The Nucleophile role is filled by Cys-59. 203–208 (GLGEMA) serves as a coordination point for NADP(+).

The protein belongs to the glutamyl-tRNA reductase family. As to quaternary structure, homodimer.

It carries out the reaction (S)-4-amino-5-oxopentanoate + tRNA(Glu) + NADP(+) = L-glutamyl-tRNA(Glu) + NADPH + H(+). The protein operates within porphyrin-containing compound metabolism; protoporphyrin-IX biosynthesis; 5-aminolevulinate from L-glutamyl-tRNA(Glu): step 1/2. Its function is as follows. Catalyzes the NADPH-dependent reduction of glutamyl-tRNA(Glu) to glutamate 1-semialdehyde (GSA). This chain is Glutamyl-tRNA reductase, found in Helicobacter pylori (strain J99 / ATCC 700824) (Campylobacter pylori J99).